The sequence spans 379 residues: tRNA 2-selenouridine synthase (379 aa).

In terms of domain architecture, Rhodanese spans 17 to 140 (FLSGAPLLDT…MRRFLIESLE (124 aa)). Cys-100 (S-selanylcysteine intermediate) is an active-site residue.

It belongs to the SelU family. As to quaternary structure, monomer.

The catalysed reaction is 5-methylaminomethyl-2-thiouridine(34) in tRNA + selenophosphate + (2E)-geranyl diphosphate + H2O + H(+) = 5-methylaminomethyl-2-selenouridine(34) in tRNA + (2E)-thiogeraniol + phosphate + diphosphate. It carries out the reaction 5-methylaminomethyl-2-thiouridine(34) in tRNA + (2E)-geranyl diphosphate = 5-methylaminomethyl-S-(2E)-geranyl-thiouridine(34) in tRNA + diphosphate. It catalyses the reaction 5-methylaminomethyl-S-(2E)-geranyl-thiouridine(34) in tRNA + selenophosphate + H(+) = 5-methylaminomethyl-2-(Se-phospho)selenouridine(34) in tRNA + (2E)-thiogeraniol. The enzyme catalyses 5-methylaminomethyl-2-(Se-phospho)selenouridine(34) in tRNA + H2O = 5-methylaminomethyl-2-selenouridine(34) in tRNA + phosphate. Functionally, involved in the post-transcriptional modification of the uridine at the wobble position (U34) of tRNA(Lys), tRNA(Glu) and tRNA(Gln). Catalyzes the conversion of 2-thiouridine (S2U-RNA) to 2-selenouridine (Se2U-RNA). Acts in a two-step process involving geranylation of 2-thiouridine (S2U) to S-geranyl-2-thiouridine (geS2U) and subsequent selenation of the latter derivative to 2-selenouridine (Se2U) in the tRNA chain. The polypeptide is tRNA 2-selenouridine synthase (Hahella chejuensis (strain KCTC 2396)).